The primary structure comprises 245 residues: Ribosomal protein L11 methyltransferase (245 aa).

Residues threonine 101, glycine 122, aspartate 144, and asparagine 184 each contribute to the S-adenosyl-L-methionine site.

Belongs to the methyltransferase superfamily. PrmA family.

It localises to the cytoplasm. The catalysed reaction is L-lysyl-[protein] + 3 S-adenosyl-L-methionine = N(6),N(6),N(6)-trimethyl-L-lysyl-[protein] + 3 S-adenosyl-L-homocysteine + 3 H(+). In terms of biological role, methylates ribosomal protein L11. In Aquifex aeolicus (strain VF5), this protein is Ribosomal protein L11 methyltransferase.